Consider the following 296-residue polypeptide: 4-diphosphocytidyl-2-C-methyl-D-erythritol kinase (296 aa).

The active site involves Lys-18. 102 to 112 serves as a coordination point for ATP; sequence PMGGGIGGGSS. Asp-144 is an active-site residue.

This sequence belongs to the GHMP kinase family. IspE subfamily.

The enzyme catalyses 4-CDP-2-C-methyl-D-erythritol + ATP = 4-CDP-2-C-methyl-D-erythritol 2-phosphate + ADP + H(+). Its pathway is isoprenoid biosynthesis; isopentenyl diphosphate biosynthesis via DXP pathway; isopentenyl diphosphate from 1-deoxy-D-xylulose 5-phosphate: step 3/6. In terms of biological role, catalyzes the phosphorylation of the position 2 hydroxy group of 4-diphosphocytidyl-2C-methyl-D-erythritol. This chain is 4-diphosphocytidyl-2-C-methyl-D-erythritol kinase, found in Vibrio atlanticus (strain LGP32) (Vibrio splendidus (strain Mel32)).